Reading from the N-terminus, the 433-residue chain is MAEEIKLTPLETFAQAISASAKTIATYCRDSGHPQLSDDNSSGLTGDVLPPSAPQAVTAARQTILEASYRLQQLVTEPSQYLPRLTVYPQHLAALRWLCHFRIPELIPVQGTRTYYELATEAKVPLHQLQSIARMAITGSFLREPEPNIVAHSRTSAHFVENPSLRDWTLFLAEDTAPMAMKLVEATEKWGDTRSKTETAFNLALGTDLAFFKYLSSNPQFTQKFSGYMKNVTASEGTSIKHLVNGFDWASLGNAIVVDVGGSTGHASIALAESFPDLKFIVQDLPMVTSTSKDNREKTPLPETVASRISFESHDFFKPQPVQNADVYLLRMILHDWSFKEAGEILANLVPSVKQGARILIMDTVLPRHGTVPVTEEALLRVRDMTMMETFNSHEREIDEWKDLIQGVHTGLRVQQVIQPAGSSMAIIEVVRG.

Residue D284 coordinates S-adenosyl-L-methionine. H335 acts as the Proton acceptor in catalysis.

Belongs to the class I-like SAM-binding methyltransferase superfamily. Cation-independent O-methyltransferase family. COMT subfamily.

The enzyme catalyses 7,9,10-trihydroxy-3-(2-oxopropyl)-1H-benzo[g]isochromen-1-one + S-adenosyl-L-methionine = 9,10-dihydroxy-7-methoxy-3-(2-oxopropyl)-1H-benzo[g]isochromen-1-one + S-adenosyl-L-homocysteine + H(+). It functions in the pathway secondary metabolite biosynthesis. Its function is as follows. O-methyltransferase; part of the gene cluster that mediates the biosynthesis of viriditoxin, one of the 'classical' secondary metabolites produced by fungi and that has antibacterial activity. The first step is performed by the polyketide synthase VdtA which condenses one acetyl-CoA and 6 malonyl-CoA units to form the heptaketide monomer backbone of viriditoxin. The product of VdtA is then O-methylated on C7 by the O-methyltransferase VdtC. The O-methyl group is important for the stereoselective coupling of the monomers at the final step of viriditoxin biosynthesis. The short-chain dehydrogenase/reductase VdtF then acts as a stereospecific reductase converting the pyrone to dihydropyrone via the reduction of the C3-C4 double bond. The FAD-binding monooxygenase VdtE then converts the ketone group into a methyl-ester group to yield semi-viriditoxin. Finally, the laccase VdtB is involved in dimerization of 2 semi-viriditoxin molecules to yield the final viriditoxin. VdtB is responsible for the regioselective 6,6'-coupling of semi-viriditoxin, which yields (M)-viriditoxin and (P)-viriditoxin at a ratio of 1:2. The non-catalytic carboxylesterase-like protein VdtD affects the stereochemistical outcome of the coupling. The highly reducing polyketide synthase VdtX is not involved in viriditoxin synthesis, but might possibly play a role in the production of additional metabolites not identified yet. This chain is O-methyltransferase VdtC, found in Byssochlamys spectabilis (Paecilomyces variotii).